The primary structure comprises 791 residues: Pleckstrin homology domain-containing family H member 3 (791 aa).

A signal peptide spans 1–18; the sequence is MPLPGGLWWLLCCRRGFT. Residues 29–41 are compositionally biased toward acidic residues; it reads LSGDGDEDEDDET. A disordered region spans residues 29 to 71; the sequence is LSGDGDEDEDDETFELRSPSPAGGGRGSLDVTLTQPTRNGPIT. Phosphoserine is present on Ser-30. Over residues 59 to 71 the composition is skewed to polar residues; it reads VTLTQPTRNGPIT. A PH domain is found at 95–199; it reads DVIVKGWLYR…WGVALREVIA (105 aa). Residues 237 to 399 form the MyTH4 domain; that stretch reads HTSSALYAPL…PSLAEISALS (163 aa). Residues 404 to 755 form the FERM domain; the sequence is LLCTVHCPGA…ANPSPERPCS (352 aa). Residues 549-559 show a composition bias toward low complexity; the sequence is PRGPLPLLDRL. Disordered stretches follow at residues 549-580 and 593-623; these read PRGP…PPPS and LAKR…GGGS. The span at 594 to 605 shows a compositional bias: basic residues; the sequence is AKRRAERARRIG. Arg-636 is subject to Omega-N-methylarginine. The tract at residues 748–791 is disordered; it reads PSPERPCSSSGPPSQDLSDTSPPSQHQVLEKPQGQSGCLRQLQD. Over residues 754–791 the composition is skewed to polar residues; it reads CSSSGPPSQDLSDTSPPSQHQVLEKPQGQSGCLRQLQD.

The chain is Pleckstrin homology domain-containing family H member 3 (Plekhh3) from Rattus norvegicus (Rat).